Here is a 240-residue protein sequence, read N- to C-terminus: MATAKELSASSNVDNTVVGPSILISGRLTGDEDLTVRGRVEGELTLSRTLIVEPSGVVKANVAVKNAIVSGVVVGNINATESVELTREGRMVGDIRAPRVIIVDGASFRGRVDMGDVEPGRLPAERPAVVRPTAVTRPTATPARPTIPAARPMPPPPPSRPTPPPPPARPSAPPAVTRPSAPITRPGLGGLGSKPLPPPPPTRVERAEPQAGQAGSAEPPTPVLVGAGAKKKVVVKKKTR.

The interacts with PadC stretch occupies residues 116–240 (DVEPGRLPAE…KKVVVKKKTR (125 aa)). The interval 117 to 240 (VEPGRLPAER…KKVVVKKKTR (124 aa)) is disordered. Residues 126 to 150 (RPAVVRPTAVTRPTATPARPTIPAA) are compositionally biased toward low complexity. The span at 151-173 (RPMPPPPPSRPTPPPPPARPSAP) shows a compositional bias: pro residues. Residues 229–240 (AKKKVVVKKKTR) are compositionally biased toward basic residues.

The protein belongs to the bactofilin family. Interacts with BacN and probably also BacO, the 3 proteins colocalize as an extended structure. Interacts with PadC.

The protein localises to the cytoplasm. Its subcellular location is the cytoskeleton. Its function is as follows. A non-essential component of the chromosome segregation machinery. Positions the ParA-ParB-parS chromosome segregation machinery within the cell; BacP seems to be the most important bactofilin in this process. Forms a heteropolymeric, subpolar scaffold in the cell; BacP probably forms the core, BacO contributes to position and integrity while BacN does not seem to contribute to assembly. This is Bactofilin BacP from Myxococcus xanthus (strain DK1622).